Here is a 746-residue protein sequence, read N- to C-terminus: Proline--tRNA ligase (746 aa).

A required for editing of incorrectly charged tRNA region spans residues 1 to 223; that stretch reads MNNNTNGEII…NSNNNNNNNN (223 aa). A compositionally biased stretch (basic and acidic residues) spans 181–201; sequence TSKARVDKKEDVQEEMAKNEE. Positions 181 to 226 are disordered; that stretch reads TSKARVDKKEDVQEEMAKNEELQNNNNNNKNNSNSNNNNNNNNNHI. Residues 204–224 are compositionally biased toward low complexity; sequence NNNNNNKNNSNSNNNNNNNNN. Arginine 390 serves as a coordination point for L-proline. ATP is bound by residues 390 to 394, 401 to 405, and 475 to 477; these read RWEFK, RTREF, and QAA. Histidine 480 is a binding site for L-proline. Residue 512 to 514 participates in ATP binding; the sequence is TTR.

This sequence belongs to the class-II aminoacyl-tRNA synthetase family. ProS type 3 subfamily. Homodimer.

Its subcellular location is the cytoplasm. The catalysed reaction is tRNA(Pro) + L-proline + ATP = L-prolyl-tRNA(Pro) + AMP + diphosphate. Inhibited by the quinazolinone-based compound febrifugine from the Chinese plant Dichroa febrifuga which is used to treat malaria-associated fever. Also inhibited by febrifugine derivatives such as halofuginone. Its function is as follows. Catalyzes the attachment of proline to tRNA(Pro) in a two-step reaction: proline is first activated by ATP to form Pro-AMP and then transferred to the acceptor end of tRNA(Pro). Functions in trans to edit the amino acid moiety from incorrectly charged Ala-tRNA(Pro). Has no activity on correctly charged Pro-tRNA(Pro) or Ala-tRNA(Ala). The polypeptide is Proline--tRNA ligase (Plasmodium falciparum (isolate 3D7)).